The chain runs to 438 residues: PHAF1 protein CG7083 (438 aa).

It belongs to the PHAF1 family.

The protein resides in the cytoplasm. It localises to the preautophagosomal structure. In terms of biological role, may play a regulatory role in autophagic activity. The protein is PHAF1 protein CG7083 of Drosophila melanogaster (Fruit fly).